A 399-amino-acid chain; its full sequence is uncharacterized protein (399 aa).

The protein belongs to the NADH:flavin oxidoreductase/NADH oxidase family. Directly interacts with lipoylated GcvH-L (SpyM50867).

This is an uncharacterized protein from Streptococcus pyogenes serotype M5 (strain Manfredo).